Here is a 434-residue protein sequence, read N- to C-terminus: Trigger factor (434 aa).

Positions 160-245 constitute a PPIase FKBP-type domain; the sequence is GDKAKINFVG…LNEVQAANLP (86 aa).

This sequence belongs to the FKBP-type PPIase family. Tig subfamily.

The protein localises to the cytoplasm. It carries out the reaction [protein]-peptidylproline (omega=180) = [protein]-peptidylproline (omega=0). Involved in protein export. Acts as a chaperone by maintaining the newly synthesized protein in an open conformation. Functions as a peptidyl-prolyl cis-trans isomerase. The polypeptide is Trigger factor (Shewanella woodyi (strain ATCC 51908 / MS32)).